Reading from the N-terminus, the 98-residue chain is Ferredoxin-3 (98 aa).

2 consecutive 4Fe-4S ferredoxin-type domains span residues 18 to 47 and 66 to 95; these read FVEAVNQDKCIGCGRCFKACGRNVLILQAL and VMSIIHPEYCIGCQACARACPKNCYTHSPL. [4Fe-4S] cluster-binding residues include cysteine 27, cysteine 30, cysteine 33, cysteine 37, cysteine 75, cysteine 78, cysteine 81, and cysteine 85.

Homodimer. The cofactor is [4Fe-4S] cluster.

Ferredoxins are iron-sulfur proteins that transfer electrons in a wide variety of metabolic reactions. In Trichormus variabilis (strain ATCC 29413 / PCC 7937) (Anabaena variabilis), this protein is Ferredoxin-3 (fdxB).